Consider the following 252-residue polypeptide: Ribosomal RNA small subunit methyltransferase J (252 aa).

Residues 101–102, 117–118, 153–154, and D171 each bind S-adenosyl-L-methionine; these read RD, ER, and SS.

It belongs to the methyltransferase superfamily. RsmJ family.

It is found in the cytoplasm. It catalyses the reaction guanosine(1516) in 16S rRNA + S-adenosyl-L-methionine = N(2)-methylguanosine(1516) in 16S rRNA + S-adenosyl-L-homocysteine + H(+). Its function is as follows. Specifically methylates the guanosine in position 1516 of 16S rRNA. This chain is Ribosomal RNA small subunit methyltransferase J, found in Salmonella typhi.